Consider the following 506-residue polypeptide: Maturase K (506 aa).

The protein belongs to the intron maturase 2 family. MatK subfamily.

It is found in the plastid. The protein resides in the chloroplast. In terms of biological role, usually encoded in the trnK tRNA gene intron. Probably assists in splicing its own and other chloroplast group II introns. This chain is Maturase K, found in Atractylodes lancea (Atractylodes japonica).